Reading from the N-terminus, the 337-residue chain is MRVLGIETSCDETGVAVYDDEQGLLSHTLYSQVKLHADYGGVVPELASRDHVRKIVPLVKQALADANCTLDDIDGVAYTKGPGLVGALLVGACMGRALAYSWDKPAIGVHHMEGHLLAPMLEDDVPAFPFLALLVSGGHSMLVAVEGIGKYEVLGESVDDAAGEAFDKTAKLMGLDYPGGPRLAKLAAKGESGHYRFPRPMTDKPGLNFSFSGLKTFAANTIAAESDDEQTRANIALAFEEAVVDTLSIKCRRALKQTGYKNLVIAGGVSANTRLRSSLAEMMTSLGGKVYYPRGEFCTDNGAMIAYAGLQRLKAGQTDDLGVKGIPRWPLDTLPPV.

Residues His-111 and His-115 each contribute to the Fe cation site. Substrate-binding positions include 134–138 (LVSGG), Asp-167, Gly-180, and Asn-272. Asp-300 contacts Fe cation.

Belongs to the KAE1 / TsaD family. Requires Fe(2+) as cofactor.

It localises to the cytoplasm. The catalysed reaction is L-threonylcarbamoyladenylate + adenosine(37) in tRNA = N(6)-L-threonylcarbamoyladenosine(37) in tRNA + AMP + H(+). Its function is as follows. Required for the formation of a threonylcarbamoyl group on adenosine at position 37 (t(6)A37) in tRNAs that read codons beginning with adenine. Is involved in the transfer of the threonylcarbamoyl moiety of threonylcarbamoyl-AMP (TC-AMP) to the N6 group of A37, together with TsaE and TsaB. TsaD likely plays a direct catalytic role in this reaction. The protein is tRNA N6-adenosine threonylcarbamoyltransferase of Shewanella woodyi (strain ATCC 51908 / MS32).